The chain runs to 684 residues: Actin-related protein 5 (684 aa).

Positions lysine 262 to asparagine 469 form a coiled coil. 2 disordered regions span residues lysine 392–tyrosine 443 and valine 481–glutamate 500. Positions serine 402–tyrosine 443 are enriched in basic and acidic residues.

The protein belongs to the actin family. ARP5 subfamily. In terms of assembly, component of the chromatin-remodeling Ino80 complex.

The protein resides in the nucleus. Proposed core component of the chromatin remodeling Ino80 complex which is involved in transcriptional regulation, DNA replication and probably DNA repair. This chain is Actin-related protein 5 (arpE), found in Dictyostelium discoideum (Social amoeba).